The following is a 285-amino-acid chain: GTP-binding protein 8 (285 aa).

Positions 110-283 constitute an EngB-type G domain; the sequence is QQPEVCFIGR…KCFIADITGS (174 aa). Residues 118-125, 147-151, 165-168, 227-230, and 262-264 each bind GTP; these read GRSNVGKS, GHTKK, DMPG, TKID, and ISA. Residues Ser125 and Thr149 each contribute to the Mg(2+) site.

The protein belongs to the TRAFAC class TrmE-Era-EngA-EngB-Septin-like GTPase superfamily. EngB GTPase family. The cofactor is Mg(2+).

This chain is GTP-binding protein 8 (Gtpbp8), found in Mus musculus (Mouse).